Here is a 365-residue protein sequence, read N- to C-terminus: Probable dual-specificity RNA methyltransferase RlmN (365 aa).

The Proton acceptor role is filled by Glu108. In terms of domain architecture, Radical SAM core spans 114–352; the sequence is YPDRNTVCIS…SCTVRDTRGR (239 aa). An intrachain disulfide couples Cys121 to Cys358. [4Fe-4S] cluster-binding residues include Cys128, Cys132, and Cys135. S-adenosyl-L-methionine-binding positions include 179–180, Ser213, 236–238, and Asn315; these read GE and SLH. Cys358 functions as the S-methylcysteine intermediate in the catalytic mechanism.

Belongs to the radical SAM superfamily. RlmN family. [4Fe-4S] cluster serves as cofactor.

It is found in the cytoplasm. It catalyses the reaction adenosine(2503) in 23S rRNA + 2 reduced [2Fe-2S]-[ferredoxin] + 2 S-adenosyl-L-methionine = 2-methyladenosine(2503) in 23S rRNA + 5'-deoxyadenosine + L-methionine + 2 oxidized [2Fe-2S]-[ferredoxin] + S-adenosyl-L-homocysteine. It carries out the reaction adenosine(37) in tRNA + 2 reduced [2Fe-2S]-[ferredoxin] + 2 S-adenosyl-L-methionine = 2-methyladenosine(37) in tRNA + 5'-deoxyadenosine + L-methionine + 2 oxidized [2Fe-2S]-[ferredoxin] + S-adenosyl-L-homocysteine. Its function is as follows. Specifically methylates position 2 of adenine 2503 in 23S rRNA and position 2 of adenine 37 in tRNAs. The chain is Probable dual-specificity RNA methyltransferase RlmN from Mycolicibacterium vanbaalenii (strain DSM 7251 / JCM 13017 / BCRC 16820 / KCTC 9966 / NRRL B-24157 / PYR-1) (Mycobacterium vanbaalenii).